Consider the following 119-residue polypeptide: Ribosome-binding factor A (119 aa).

This sequence belongs to the RbfA family. In terms of assembly, monomer. Binds 30S ribosomal subunits, but not 50S ribosomal subunits or 70S ribosomes.

Its subcellular location is the cytoplasm. In terms of biological role, one of several proteins that assist in the late maturation steps of the functional core of the 30S ribosomal subunit. Associates with free 30S ribosomal subunits (but not with 30S subunits that are part of 70S ribosomes or polysomes). Required for efficient processing of 16S rRNA. May interact with the 5'-terminal helix region of 16S rRNA. The protein is Ribosome-binding factor A of Ligilactobacillus salivarius (strain UCC118) (Lactobacillus salivarius).